The chain runs to 233 residues: Ribose-5-phosphate isomerase A (233 aa).

Substrate contacts are provided by residues 28–31 (TGST), 85–88 (DGAD), and 98–101 (KGLG). The Proton acceptor role is filled by glutamate 107. Lysine 125 serves as a coordination point for substrate.

This sequence belongs to the ribose 5-phosphate isomerase family. In terms of assembly, homodimer.

It carries out the reaction aldehydo-D-ribose 5-phosphate = D-ribulose 5-phosphate. It functions in the pathway carbohydrate degradation; pentose phosphate pathway; D-ribose 5-phosphate from D-ribulose 5-phosphate (non-oxidative stage): step 1/1. Its function is as follows. Catalyzes the reversible conversion of ribose-5-phosphate to ribulose 5-phosphate. This Roseiflexus sp. (strain RS-1) protein is Ribose-5-phosphate isomerase A.